Here is an 88-residue protein sequence, read N- to C-terminus: Protein MATERNALLY EXPRESSED GENE 2 (88 aa).

A signal peptide spans 1–27 (MEYRKRVDALVFFSLLLLGYFAAHAHG). Cysteine 65 and cysteine 87 are disulfide-bonded.

This sequence belongs to the MEG family. Expressed exclusively in endosperm.

The protein is Protein MATERNALLY EXPRESSED GENE 2 (MEG2) of Zea mays (Maize).